A 224-amino-acid chain; its full sequence is MKIAVLGGTGDQGLGLALRLALAGEEVIIGSRDAEKAVSAAQKVLEIAERDDLKVKGATNAEAAEEAEVAILTVPLQAQMATLGSVKEAIKGKVLIDATVPIDSCLGGSAVRYIDLWDGSAAERAARFLEDQGTRVAAAFNNISASALLDITGPVDCDCLIASDHRDALDLASELAEKIDGVRAIDCGGLENARVIEKITPLLINLNIKNRIRNAGIRITNLPE.

Residues 9 to 12 (TGDQ), 31 to 32 (SR), Lys36, Val74, Val100, and Ala145 each bind NADP(+).

The protein belongs to the F420-dependent NADP reductase family. As to quaternary structure, homotetramer.

The catalysed reaction is reduced coenzyme F420-(gamma-L-Glu)(n) + NADP(+) = oxidized coenzyme F420-(gamma-L-Glu)(n) + NADPH + 2 H(+). Functionally, catalyzes the reduction of NADP(+) with F420H(2) via hydride transfer, and the reverse reaction, i.e. the reduction of F420 with NADPH. Probably functions in the regeneration of NADPH required in biosynthetic reactions. The protein is F420-dependent NADP reductase of Methanothermobacter marburgensis (strain ATCC BAA-927 / DSM 2133 / JCM 14651 / NBRC 100331 / OCM 82 / Marburg) (Methanobacterium thermoautotrophicum).